The primary structure comprises 692 residues: A-type ATP synthase subunit I (692 aa).

7 helical membrane-spanning segments follow: residues 389–409, 422–442, 494–514, 531–551, 553–573, 602–622, and 624–644; these read GIML…LFIW, LGYI…ITGG, ILVF…FVGF, GVWI…FAGA, TMIA…ASMY, ARLL…NIMA, and LVGE…LLVG.

Belongs to the V-ATPase 116 kDa subunit family. In terms of assembly, the A-type ATPase is composed of subunits A(3), B(3), C, D, E(1 or 2), F, H(2), I and K(x).

It is found in the cell membrane. In terms of biological role, component of the A-type ATP synthase that produces ATP from ADP in the presence of a proton gradient across the membrane. This is A-type ATP synthase subunit I from Methanocaldococcus jannaschii (strain ATCC 43067 / DSM 2661 / JAL-1 / JCM 10045 / NBRC 100440) (Methanococcus jannaschii).